The chain runs to 369 residues: Transmembrane protein 198 (369 aa).

The next 7 helical transmembrane spans lie at Val37 to Gly57, Cys60 to Leu80, Val93 to Leu113, Val117 to Gly137, Ser148 to Leu168, Val181 to Val201, and Val216 to Leu236. The disordered stretch occupies residues Arg266–Ile308.

The protein belongs to the TMEM198 family.

The protein resides in the membrane. This chain is Transmembrane protein 198 (tmem198ab), found in Danio rerio (Zebrafish).